We begin with the raw amino-acid sequence, 284 residues long: L-ribulose-5-phosphate 3-epimerase UlaE (284 aa).

It belongs to the L-ribulose-5-phosphate 3-epimerase family.

The enzyme catalyses L-ribulose 5-phosphate = L-xylulose 5-phosphate. Its pathway is cofactor degradation; L-ascorbate degradation; D-xylulose 5-phosphate from L-ascorbate: step 3/4. In terms of biological role, catalyzes the isomerization of L-xylulose-5-phosphate to L-ribulose-5-phosphate. Is involved in the anaerobic L-ascorbate utilization. This is L-ribulose-5-phosphate 3-epimerase UlaE from Salmonella choleraesuis (strain SC-B67).